Consider the following 340-residue polypeptide: Methane monooxygenase component C (340 aa).

A 2Fe-2S ferredoxin-type domain is found at 1-92 (MYQIVIETED…DLHLLVPYTY (92 aa)). [2Fe-2S] cluster-binding residues include Cys-37, Cys-41, Cys-44, and Cys-76. The 105-residue stretch at 101-205 (QTNWLAEILA…RGPAGSFFLH (105 aa)) folds into the FAD-binding FR-type domain. 215–229 (VAGGTGLSPVLSMIR) provides a ligand contact to FAD.

As to quaternary structure, the soluble methane monooxygenase (sMMO) consists of four components A/MMOH (composed of alpha/MmoX, beta/MmoY and gamma/MmoZ), B/MMOB (MmoB), C/MMOR (MmoC) and D/MMOD (MmoD). [2Fe-2S] cluster is required as a cofactor.

It catalyses the reaction methane + NADH + O2 + H(+) = methanol + NAD(+) + H2O. The enzyme catalyses methane + NADPH + O2 + H(+) = methanol + NADP(+) + H2O. In terms of biological role, responsible for the initial oxygenation of methane to methanol in methanotrophs. It also catalyzes the monohydroxylation of a variety of unactivated alkenes, alicyclic, aromatic and heterocyclic compounds. The component C is the iron-sulfur flavoprotein of sMMO. This chain is Methane monooxygenase component C (mmoC), found in Methylosinus trichosporium.